A 227-amino-acid chain; its full sequence is Cytochrome c oxidase subunit 2 (227 aa).

Residues 1-14 are Mitochondrial intermembrane-facing; it reads MANHSQLGFQDASS. Residues 15-45 traverse the membrane as a helical segment; the sequence is PIMEELVEFHDHALMVALAICSLVLYLLTLM. Residues 46–58 are Mitochondrial matrix-facing; it reads LTQKLSSNTVDAQ. Residues 59-86 traverse the membrane as a helical segment; sequence EVELIWTILPAIVLVLLALPSLQILYMM. Residues 87 to 227 lie on the Mitochondrial intermembrane side of the membrane; sequence DEIEEPDLTL…FETWSSLLSS (141 aa). Cu cation-binding residues include His-160, Cys-195, Glu-197, Cys-199, His-203, and Met-206. Glu-197 contributes to the Mg(2+) binding site.

It belongs to the cytochrome c oxidase subunit 2 family. In terms of assembly, component of the cytochrome c oxidase (complex IV, CIV), a multisubunit enzyme composed of 14 subunits. The complex is composed of a catalytic core of 3 subunits MT-CO1, MT-CO2 and MT-CO3, encoded in the mitochondrial DNA, and 11 supernumerary subunits COX4I, COX5A, COX5B, COX6A, COX6B, COX6C, COX7A, COX7B, COX7C, COX8 and NDUFA4, which are encoded in the nuclear genome. The complex exists as a monomer or a dimer and forms supercomplexes (SCs) in the inner mitochondrial membrane with NADH-ubiquinone oxidoreductase (complex I, CI) and ubiquinol-cytochrome c oxidoreductase (cytochrome b-c1 complex, complex III, CIII), resulting in different assemblies (supercomplex SCI(1)III(2)IV(1) and megacomplex MCI(2)III(2)IV(2)). Found in a complex with TMEM177, COA6, COX18, COX20, SCO1 and SCO2. Interacts with TMEM177 in a COX20-dependent manner. Interacts with COX20. Interacts with COX16. Requires Cu cation as cofactor.

Its subcellular location is the mitochondrion inner membrane. It catalyses the reaction 4 Fe(II)-[cytochrome c] + O2 + 8 H(+)(in) = 4 Fe(III)-[cytochrome c] + 2 H2O + 4 H(+)(out). Functionally, component of the cytochrome c oxidase, the last enzyme in the mitochondrial electron transport chain which drives oxidative phosphorylation. The respiratory chain contains 3 multisubunit complexes succinate dehydrogenase (complex II, CII), ubiquinol-cytochrome c oxidoreductase (cytochrome b-c1 complex, complex III, CIII) and cytochrome c oxidase (complex IV, CIV), that cooperate to transfer electrons derived from NADH and succinate to molecular oxygen, creating an electrochemical gradient over the inner membrane that drives transmembrane transport and the ATP synthase. Cytochrome c oxidase is the component of the respiratory chain that catalyzes the reduction of oxygen to water. Electrons originating from reduced cytochrome c in the intermembrane space (IMS) are transferred via the dinuclear copper A center (CU(A)) of subunit 2 and heme A of subunit 1 to the active site in subunit 1, a binuclear center (BNC) formed by heme A3 and copper B (CU(B)). The BNC reduces molecular oxygen to 2 water molecules using 4 electrons from cytochrome c in the IMS and 4 protons from the mitochondrial matrix. The chain is Cytochrome c oxidase subunit 2 (MT-CO2) from Coturnix japonica (Japanese quail).